A 479-amino-acid polypeptide reads, in one-letter code: Ammonium transporter 3 member 2 (479 aa).

11 helical membrane-spanning segments follow: residues 34-54 (VAAT…YGGV), 59-79 (WAVN…ICWV), 139-159 (VVYF…GSLL), 164-184 (FLAW…VGAF), 202-222 (GGYV…YWVG), 237-257 (ILFT…FNGG), 272-292 (NTNI…VIFF), 297-317 (VVGA…AAGV), 321-341 (WAAL…MMIL), 355-375 (LGVF…TGLF), and 407-427 (IAGG…ICLA).

The protein belongs to the ammonia transporter channel (TC 1.A.11.2) family.

It localises to the membrane. Involved in ammonium transport. The polypeptide is Ammonium transporter 3 member 2 (AMT3-2) (Oryza sativa subsp. japonica (Rice)).